The following is a 275-amino-acid chain: 2,3,4,5-tetrahydropyridine-2,6-dicarboxylate N-succinyltransferase (275 aa).

2 residues coordinate substrate: arginine 106 and aspartate 143.

The protein belongs to the transferase hexapeptide repeat family. Homotrimer.

It is found in the cytoplasm. It carries out the reaction (S)-2,3,4,5-tetrahydrodipicolinate + succinyl-CoA + H2O = (S)-2-succinylamino-6-oxoheptanedioate + CoA. It participates in amino-acid biosynthesis; L-lysine biosynthesis via DAP pathway; LL-2,6-diaminopimelate from (S)-tetrahydrodipicolinate (succinylase route): step 1/3. The sequence is that of 2,3,4,5-tetrahydropyridine-2,6-dicarboxylate N-succinyltransferase from Ralstonia nicotianae (strain ATCC BAA-1114 / GMI1000) (Ralstonia solanacearum).